The following is a 143-amino-acid chain: Nucleoside diphosphate kinase (143 aa).

ATP is bound by residues K11, F59, R87, T93, R104, and N114. The active-site Pros-phosphohistidine intermediate is the H117.

It belongs to the NDK family. Homotetramer. Mg(2+) serves as cofactor.

The protein resides in the cytoplasm. The enzyme catalyses a 2'-deoxyribonucleoside 5'-diphosphate + ATP = a 2'-deoxyribonucleoside 5'-triphosphate + ADP. It catalyses the reaction a ribonucleoside 5'-diphosphate + ATP = a ribonucleoside 5'-triphosphate + ADP. Its function is as follows. Major role in the synthesis of nucleoside triphosphates other than ATP. The ATP gamma phosphate is transferred to the NDP beta phosphate via a ping-pong mechanism, using a phosphorylated active-site intermediate. This Escherichia coli O81 (strain ED1a) protein is Nucleoside diphosphate kinase.